The chain runs to 430 residues: Adenylosuccinate synthetase (430 aa).

Residues 12–18 and 40–42 contribute to the GTP site; these read GDEGKGK and GHT. The active-site Proton acceptor is aspartate 13. Residues aspartate 13 and glycine 40 each contribute to the Mg(2+) site. IMP contacts are provided by residues 13 to 16, 38 to 41, threonine 128, arginine 142, glutamine 223, threonine 238, and arginine 302; these read DEGK and NAGH. Residue histidine 41 is the Proton donor of the active site. Position 298–304 (298–304) interacts with substrate; the sequence is TTTGRPR. GTP is bound by residues arginine 304, 330 to 332, and 412 to 414; these read SID and SVG.

It belongs to the adenylosuccinate synthetase family. As to quaternary structure, homodimer. Requires Mg(2+) as cofactor.

Its subcellular location is the cytoplasm. It carries out the reaction IMP + L-aspartate + GTP = N(6)-(1,2-dicarboxyethyl)-AMP + GDP + phosphate + 2 H(+). The protein operates within purine metabolism; AMP biosynthesis via de novo pathway; AMP from IMP: step 1/2. In terms of biological role, plays an important role in the de novo pathway of purine nucleotide biosynthesis. Catalyzes the first committed step in the biosynthesis of AMP from IMP. The chain is Adenylosuccinate synthetase from Streptococcus pyogenes serotype M4 (strain MGAS10750).